We begin with the raw amino-acid sequence, 310 residues long: Olfactory receptor 7A42 (310 aa).

The Extracellular segment spans residues 1–25; it reads MESGNSTRRIPSFFLLGFSENPHLQ. N5 carries N-linked (GlcNAc...) asparagine glycosylation. Residues 26–46 traverse the membrane as a helical segment; that stretch reads FLIFVLFLSMYLVTVLGNLLI. Residues 47-67 lie on the Cytoplasmic side of the membrane; it reads IMVIITQSPLHTPMYFFLANL. Residues 68-88 traverse the membrane as a helical segment; it reads SFVDICFTSTTVPKMLVNIQT. The Extracellular portion of the chain corresponds to 89-100; the sequence is QSKAITYADCIS. Cysteines 98 and 190 form a disulfide. A helical membrane pass occupies residues 101-121; sequence QMSVFLVFAELDNFLLAVMAY. The Cytoplasmic portion of the chain corresponds to 122–135; sequence DRYVAICHPLYYTF. Residues 136–156 form a helical membrane-spanning segment; the sequence is IVNQHLCILMVLLSWVVSILH. Residues 157–202 are Extracellular-facing; that stretch reads AFLQSSIVLQLTFCGDVKIPHFFCELNQLSQLTCLDSLSSHLIMNL. A helical transmembrane segment spans residues 203 to 223; that stretch reads VPVLLAVISFSSILYSYFKIV. At 224 to 240 the chain is on the cytoplasmic side; the sequence is SSICSISSVQGKYTAFS. The helical transmembrane segment at 241–261 threads the bilayer; it reads TCVSHLSIVFLFYSTGLGVYV. Residues 262–272 are Extracellular-facing; sequence SSAVVQSSHSA. The chain crosses the membrane as a helical span at residues 273–293; that stretch reads ARASVMYTVVTPMLNPFIYSL. Residues 294-310 lie on the Cytoplasmic side of the membrane; it reads RNKDVKKALERLLEGKL.

The protein belongs to the G-protein coupled receptor 1 family.

The protein resides in the cell membrane. In terms of biological role, odorant receptor. The protein is Olfactory receptor 7A42 of Mus musculus (Mouse).